A 241-amino-acid polypeptide reads, in one-letter code: Pyridoxine 5'-phosphate synthase (241 aa).

Position 7 (Asn7) interacts with 3-amino-2-oxopropyl phosphate. 9–10 (DH) provides a ligand contact to 1-deoxy-D-xylulose 5-phosphate. A 3-amino-2-oxopropyl phosphate-binding site is contributed by Arg18. The active-site Proton acceptor is the His43. The 1-deoxy-D-xylulose 5-phosphate site is built by Arg45 and His50. The active-site Proton acceptor is the Glu70. Thr100 lines the 1-deoxy-D-xylulose 5-phosphate pocket. His191 functions as the Proton donor in the catalytic mechanism. 3-amino-2-oxopropyl phosphate-binding positions include Gly192 and 213–214 (GH).

The protein belongs to the PNP synthase family. Homooctamer; tetramer of dimers.

It is found in the cytoplasm. The enzyme catalyses 3-amino-2-oxopropyl phosphate + 1-deoxy-D-xylulose 5-phosphate = pyridoxine 5'-phosphate + phosphate + 2 H2O + H(+). It participates in cofactor biosynthesis; pyridoxine 5'-phosphate biosynthesis; pyridoxine 5'-phosphate from D-erythrose 4-phosphate: step 5/5. Functionally, catalyzes the complicated ring closure reaction between the two acyclic compounds 1-deoxy-D-xylulose-5-phosphate (DXP) and 3-amino-2-oxopropyl phosphate (1-amino-acetone-3-phosphate or AAP) to form pyridoxine 5'-phosphate (PNP) and inorganic phosphate. The polypeptide is Pyridoxine 5'-phosphate synthase (Acidithiobacillus ferrooxidans (strain ATCC 23270 / DSM 14882 / CIP 104768 / NCIMB 8455) (Ferrobacillus ferrooxidans (strain ATCC 23270))).